Consider the following 577-residue polypeptide: Multidrug transporter TPO1_2 (577 aa).

A disordered region spans residues 1–63; the sequence is MSSTSSDRPY…ALSKNSTQTS (63 aa). N-linked (GlcNAc...) asparagine glycans are attached at residues asparagine 44 and asparagine 58. The next 12 membrane-spanning stretches (helical) occupy residues 137-157, 167-187, 204-224, 234-254, 263-283, 293-313, 368-388, 406-426, 446-466, 475-495, 504-526, and 541-561; these read VMLC…SSIF, IYHV…LGFA, GVLV…ATAK, FFAG…FADM, AICL…VIGS, WLEY…LFFF, PLLL…YLLL, ELPY…IWWM, LLPM…FCWT, WIVP…IFLP, YLLI…GAAF, and YAGL…LLFL.

Belongs to the major facilitator superfamily. DHA1 family. Polyamines/proton antiporter (TC 2.A.1.2.16) subfamily.

It localises to the cell membrane. Its function is as follows. Multidrug resistance transporter involved in resistance to azole antifungal drugs such as the imidazoles miconazole, ketoconazole, and tioconazole; as well as the triazoles itraconazole and fluconazole. Also plays a role in the resistance to other antifungal drug families such as the polyene amphotericin B, the pyrimide analog flucytosine, the fungicide mancozeb, and the polyamine spermine. Decreases the intracellular accumulation of clotrimazole by mediating its extrusion from cells. Plays a role in biofilm formation. This chain is Multidrug transporter TPO1_2, found in Candida glabrata (strain ATCC 2001 / BCRC 20586 / JCM 3761 / NBRC 0622 / NRRL Y-65 / CBS 138) (Yeast).